Consider the following 1506-residue polypeptide: ABC transporter C family member 9 (1506 aa).

The next 11 membrane-spanning stretches (helical) occupy residues 37–57, 84–104, 116–136, 150–170, 179–199, 315–335, 350–370, 427–447, 452–472, 541–561, and 567–587; these read MQVT…FGVV, ISLL…LLLF, VSVF…SVVV, MLRS…AHFI, FQDY…AVSI, AINA…PYLI, LNHG…ETVT, FIWY…AIYI, LGLG…CNYP, FILW…CMLM, and AGAV…IFGL. The region spanning 314-596 is the ABC transmembrane type-1 1 domain; that stretch reads AAINAVFAVV…LPDLLSALVQ (283 aa). Residues 630–853 form the ABC transporter 1 domain; sequence VEIENGAFSW…NIGFEVLVGA (224 aa). 665 to 672 lines the ATP pocket; that stretch reads GAVGSGKS. 5 consecutive transmembrane segments (helical) span residues 934–956, 976–996, 1048–1068, 1167–1187, and 1191–1211; these read LLVP…SNYW, ILLV…ARTI, MAVK…TIFV, LSHF…EGVI, and IAGL…TVIW. Positions 936-1218 constitute an ABC transmembrane type-1 2 domain; the sequence is VPFIILAQSC…VIWNICNAEN (283 aa). The ABC transporter 2 domain occupies 1257-1489; that stretch reads FRDLQVRYAE…EDSFFSKLIK (233 aa). Residue 1289 to 1296 participates in ATP binding; sequence GRTGSGKS.

This sequence belongs to the ABC transporter superfamily. ABCC family. Conjugate transporter (TC 3.A.1.208) subfamily. In terms of tissue distribution, ubiquitous.

It localises to the membrane. It carries out the reaction ATP + H2O + xenobioticSide 1 = ADP + phosphate + xenobioticSide 2.. Pump for glutathione S-conjugates. This Arabidopsis thaliana (Mouse-ear cress) protein is ABC transporter C family member 9 (ABCC9).